The primary structure comprises 426 residues: Serine--tRNA ligase (426 aa).

Residue 231-233 participates in L-serine binding; the sequence is TSE. ATP is bound at residue 262-264; it reads RSE. Glu285 is a binding site for L-serine. An ATP-binding site is contributed by 349-352; that stretch reads EISS. Ser385 provides a ligand contact to L-serine.

This sequence belongs to the class-II aminoacyl-tRNA synthetase family. Type-1 seryl-tRNA synthetase subfamily. In terms of assembly, homodimer. The tRNA molecule binds across the dimer.

The protein resides in the cytoplasm. It carries out the reaction tRNA(Ser) + L-serine + ATP = L-seryl-tRNA(Ser) + AMP + diphosphate + H(+). The enzyme catalyses tRNA(Sec) + L-serine + ATP = L-seryl-tRNA(Sec) + AMP + diphosphate + H(+). It participates in aminoacyl-tRNA biosynthesis; selenocysteinyl-tRNA(Sec) biosynthesis; L-seryl-tRNA(Sec) from L-serine and tRNA(Sec): step 1/1. Its function is as follows. Catalyzes the attachment of serine to tRNA(Ser). Is also able to aminoacylate tRNA(Sec) with serine, to form the misacylated tRNA L-seryl-tRNA(Sec), which will be further converted into selenocysteinyl-tRNA(Sec). This chain is Serine--tRNA ligase, found in Legionella pneumophila (strain Corby).